A 551-amino-acid polypeptide reads, in one-letter code: Protein ROOT HAIR SPECIFIC 17 (551 aa).

The chain crosses the membrane as a helical; Signal-anchor for type II membrane protein span at residues 39-59; sequence LFPLVSAVSGCLLLILFSFST. 2 N-linked (GlcNAc...) asparagine glycosylation sites follow: Asn109 and Asn153. Residue 293 to 295 coordinates substrate; sequence HLR. Asn405 and Asn465 each carry an N-linked (GlcNAc...) asparagine glycan. Positions 515–539 are disordered; sequence KAKHVNEDDSSEYSEIGNVPISSRS.

This sequence belongs to the glycosyltransferase GT106 family. Specifically expressed in the root hair.

It is found in the membrane. It participates in glycan metabolism. The chain is Protein ROOT HAIR SPECIFIC 17 from Arabidopsis thaliana (Mouse-ear cress).